The chain runs to 296 residues: NAD kinase (296 aa).

Asp72 functions as the Proton acceptor in the catalytic mechanism. NAD(+) is bound by residues 72 to 73, 146 to 147, Arg157, Lys174, Asp176, 187 to 192, and Gln247; these read DG, ND, and TAYALS.

This sequence belongs to the NAD kinase family. A divalent metal cation is required as a cofactor.

It localises to the cytoplasm. The catalysed reaction is NAD(+) + ATP = ADP + NADP(+) + H(+). Involved in the regulation of the intracellular balance of NAD and NADP, and is a key enzyme in the biosynthesis of NADP. Catalyzes specifically the phosphorylation on 2'-hydroxyl of the adenosine moiety of NAD to yield NADP. The chain is NAD kinase from Pseudomonas fluorescens (strain ATCC BAA-477 / NRRL B-23932 / Pf-5).